The sequence spans 64 residues: Large ribosomal subunit protein bL33 (64 aa).

Belongs to the bacterial ribosomal protein bL33 family.

This is Large ribosomal subunit protein bL33 from Synechococcus sp. (strain JA-3-3Ab) (Cyanobacteria bacterium Yellowstone A-Prime).